A 257-amino-acid polypeptide reads, in one-letter code: Acetylglutamate kinase (257 aa).

Substrate contacts are provided by residues 43–44 (GG), arginine 65, and asparagine 157. ATP is bound by residues 180-185 (DISSIL) and 208-210 (IIT).

The protein belongs to the acetylglutamate kinase family. ArgB subfamily. Homodimer.

Its subcellular location is the cytoplasm. The catalysed reaction is N-acetyl-L-glutamate + ATP = N-acetyl-L-glutamyl 5-phosphate + ADP. The protein operates within amino-acid biosynthesis; L-arginine biosynthesis; N(2)-acetyl-L-ornithine from L-glutamate: step 2/4. In terms of biological role, catalyzes the ATP-dependent phosphorylation of N-acetyl-L-glutamate. In Buchnera aphidicola subsp. Acyrthosiphon pisum (strain Tuc7), this protein is Acetylglutamate kinase.